The sequence spans 360 residues: Threonine synthase (360 aa).

K69 bears the N6-(pyridoxal phosphate)lysine mark. Pyridoxal 5'-phosphate-binding positions include N95, G196–N200, and T326.

Belongs to the threonine synthase family. As to quaternary structure, homodimer. The cofactor is pyridoxal 5'-phosphate.

The catalysed reaction is O-phospho-L-homoserine + H2O = L-threonine + phosphate. It functions in the pathway amino-acid biosynthesis; L-threonine biosynthesis; L-threonine from L-aspartate: step 5/5. Its function is as follows. Catalyzes the gamma-elimination of phosphate from L-phosphohomoserine and the beta-addition of water to produce L-threonine. This is Threonine synthase (thrC) from Mycobacterium bovis (strain ATCC BAA-935 / AF2122/97).